Here is a 325-residue protein sequence, read N- to C-terminus: Protein ORANGE-ORANGE, chloroplastic (325 aa).

The transit peptide at 1-54 directs the protein to the chloroplast; that stretch reads MDRVLVASYPINHLIRPHSFRIDYCWSTCFTSRLNSGKERQKLSSRWRWRSMAS. Low complexity predominate over residues 53 to 71; it reads ASDSTDSSSSSSFAPSVES. The segment at 53–77 is disordered; it reads ASDSTDSSSSSSFAPSVESDPSDKT. The next 2 membrane-spanning stretches (helical) occupy residues 164-184 and 217-237; these read LYYV…GLLA and IVAS…VVEV. The interval 226–317 is CR-type-like; the sequence is VGVISALMVV…CTGMAMASEH (92 aa). The CXXCXGXG motif repeat unit spans residues 248-255; sequence CKYCLGTG. Residues 259–266 form a CXXCXXXG motif repeat; that stretch reads CARCSNTG. Residues 292–299 form a CXXCXGXG motif repeat; the sequence is CQNCSGSG. One copy of the CXXCXXXG motif repeat lies at 303 to 310; sequence CPTCLCTG.

This sequence belongs to the orange-like family.

It is found in the plastid. Its subcellular location is the chloroplast membrane. Functionally, triggers accumulation of carotenoids, mainly beta-carotene, in fruit flesh. This Cucumis melo (Muskmelon) protein is Protein ORANGE-ORANGE, chloroplastic.